Here is a 71-residue protein sequence, read N- to C-terminus: Lantibiotic Flvbeta.c (71 aa).

Positions 1–33 are cleaved as a propeptide — cleaved by FlvT; it reads MENKFDMEKFKKLAAVVSEDELDTLLDETTVGA. The segment at residues 35-39 is a cross-link (lanthionine (Ser-Cys); by FlvM2); sequence SSNDC. S36 is modified (2,3-didehydroalanine (Ser); by FlvM2). Cross-links (beta-methyllanthionine (Thr-Cys); by FlvM2) lie at residues 54–60, 62–65, and 66–69; these read TSKFDWC, TGAC, and TTSC.

Contains LL-lanthionine and DL-beta-methyllanthionine, when coepressed in E.coli with the flavecin synthetase FlvM2.

It localises to the secreted. Functionally, lanthionine-containing peptide antibiotic (lantibiotic) that is probably active on Gram-positive bacteria, since its analog [Del1]Flvbeta.c shows antibacterial activity against M.luteus. This activity is not synergistically enhanced by [Del2]Flvalpha.a, an analog of Flvalpha.a, which is encoded by the same operon than Flvbeta.c. The bactericidal activity of lantibiotics is based on depolarization of energized bacterial cytoplasmic membranes, initiated by the formation of aqueous transmembrane pores. This is Lantibiotic Flvbeta.c from Ruminococcus flavefaciens.